The sequence spans 343 residues: L-threonine 3-dehydrogenase (343 aa).

Zn(2+) is bound at residue Cys40. Catalysis depends on charge relay system residues Thr42 and His45. Residues His65, Glu66, Cys95, Cys98, Cys101, and Cys109 each contribute to the Zn(2+) site. NAD(+)-binding positions include Ile177, Asp197, Arg202, 264-266 (LGI), and 288-289 (IY).

Belongs to the zinc-containing alcohol dehydrogenase family. In terms of assembly, homotetramer. Zn(2+) is required as a cofactor.

It localises to the cytoplasm. It catalyses the reaction L-threonine + NAD(+) = (2S)-2-amino-3-oxobutanoate + NADH + H(+). It participates in amino-acid degradation; L-threonine degradation via oxydo-reductase pathway; glycine from L-threonine: step 1/2. Catalyzes the NAD(+)-dependent oxidation of L-threonine to 2-amino-3-ketobutyrate. The protein is L-threonine 3-dehydrogenase of Photobacterium profundum (strain SS9).